A 449-amino-acid chain; its full sequence is Chromosomal replication initiator protein DnaA (449 aa).

The interval 1 to 72 (MENIHDLWER…SETIDDLTGV (72 aa)) is domain I, interacts with DnaA modulators. The domain II stretch occupies residues 72–111 (VRLYPKFVIPTSQLDEPFVEQELKKPMKQPPAQNGEMPNN). A domain III, AAA+ region region spans residues 112 to 328 (MLNDKYTFDT…GALIRVVAYS (217 aa)). Residues Gly156, Gly158, Lys159, and Thr160 each coordinate ATP. The domain IV, binds dsDNA stretch occupies residues 329–449 (SLINQDMNAD…IQDISDKLRS (121 aa)).

Belongs to the DnaA family. As to quaternary structure, oligomerizes as a right-handed, spiral filament on DNA at oriC.

It is found in the cytoplasm. Plays an essential role in the initiation and regulation of chromosomal replication. ATP-DnaA binds to the origin of replication (oriC) to initiate formation of the DNA replication initiation complex once per cell cycle. Binds the DnaA box (a 9 base pair repeat at the origin) and separates the double-stranded (ds)DNA. Forms a right-handed helical filament on oriC DNA; dsDNA binds to the exterior of the filament while single-stranded (ss)DNA is stabiized in the filament's interior. The ATP-DnaA-oriC complex binds and stabilizes one strand of the AT-rich DNA unwinding element (DUE), permitting loading of DNA polymerase. After initiation quickly degrades to an ADP-DnaA complex that is not apt for DNA replication. Binds acidic phospholipids. In Halalkalibacterium halodurans (strain ATCC BAA-125 / DSM 18197 / FERM 7344 / JCM 9153 / C-125) (Bacillus halodurans), this protein is Chromosomal replication initiator protein DnaA.